The chain runs to 330 residues: tRNA uridine(34) hydroxylase (330 aa).

Positions 123–217 constitute a Rhodanese domain; that stretch reads SDPEVILVDT…YLEEVKQEES (95 aa). Residue C177 is the Cysteine persulfide intermediate of the active site.

The protein belongs to the TrhO family.

The catalysed reaction is uridine(34) in tRNA + AH2 + O2 = 5-hydroxyuridine(34) in tRNA + A + H2O. In terms of biological role, catalyzes oxygen-dependent 5-hydroxyuridine (ho5U) modification at position 34 in tRNAs. In Shewanella sp. (strain MR-4), this protein is tRNA uridine(34) hydroxylase.